Reading from the N-terminus, the 670-residue chain is DNA ligase (670 aa).

NAD(+)-binding positions include 32–36, 81–82, and E114; these read DSEYD and SL. The N6-AMP-lysine intermediate role is filled by K116. The NAD(+) site is built by R137, E174, K291, and K315. Residues C409, C412, C427, and C433 each coordinate Zn(2+). Residues 592–670 form the BRCT domain; that stretch reads ASENLFKDKT…EEEFLAQITR (79 aa).

This sequence belongs to the NAD-dependent DNA ligase family. LigA subfamily. It depends on Mg(2+) as a cofactor. Mn(2+) is required as a cofactor.

The enzyme catalyses NAD(+) + (deoxyribonucleotide)n-3'-hydroxyl + 5'-phospho-(deoxyribonucleotide)m = (deoxyribonucleotide)n+m + AMP + beta-nicotinamide D-nucleotide.. DNA ligase that catalyzes the formation of phosphodiester linkages between 5'-phosphoryl and 3'-hydroxyl groups in double-stranded DNA using NAD as a coenzyme and as the energy source for the reaction. It is essential for DNA replication and repair of damaged DNA. This chain is DNA ligase, found in Haemophilus influenzae (strain PittGG).